Here is a 123-residue protein sequence, read N- to C-terminus: Ig heavy chain V region HPCM6 (123 aa).

Positions 1 to 114 (EVKLVESGGG…YPHWYFDVWG (114 aa)) constitute an Ig-like domain.

The polypeptide is Ig heavy chain V region HPCM6 (Mus musculus (Mouse)).